Reading from the N-terminus, the 199-residue chain is N-(5'-phosphoribosyl)anthranilate isomerase (199 aa).

It belongs to the TrpF family.

It catalyses the reaction N-(5-phospho-beta-D-ribosyl)anthranilate = 1-(2-carboxyphenylamino)-1-deoxy-D-ribulose 5-phosphate. Its pathway is amino-acid biosynthesis; L-tryptophan biosynthesis; L-tryptophan from chorismate: step 3/5. This Lacticaseibacillus casei (strain BL23) (Lactobacillus casei) protein is N-(5'-phosphoribosyl)anthranilate isomerase.